We begin with the raw amino-acid sequence, 176 residues long: MNTCTPNIKPSYDYNDLLASGRGELFGSEGPQLPAPSMLMMDRITKITDKEGLFEKGYIEAELDINQDLPFFGCHFIGDPVMPGCLGLDAMWQLVGFYLGWVGGKGKGRALGVGEVKFTGQILPTAKKVIYRINMKRVINRKLVMGLADGEVEVDGRIIYTATDLKVGLFQDTTSF.

H75 is an active-site residue.

The protein belongs to the thioester dehydratase family. FabA subfamily. In terms of assembly, homodimer.

The protein localises to the cytoplasm. The catalysed reaction is a (3R)-hydroxyacyl-[ACP] = a (2E)-enoyl-[ACP] + H2O. It catalyses the reaction (3R)-hydroxydecanoyl-[ACP] = (2E)-decenoyl-[ACP] + H2O. The enzyme catalyses (2E)-decenoyl-[ACP] = (3Z)-decenoyl-[ACP]. The protein operates within lipid metabolism; fatty acid biosynthesis. Functionally, necessary for the introduction of cis unsaturation into fatty acids. Catalyzes the dehydration of (3R)-3-hydroxydecanoyl-ACP to E-(2)-decenoyl-ACP and then its isomerization to Z-(3)-decenoyl-ACP. Can catalyze the dehydratase reaction for beta-hydroxyacyl-ACPs with saturated chain lengths up to 16:0, being most active on intermediate chain length. This is 3-hydroxydecanoyl-[acyl-carrier-protein] dehydratase from Glaesserella parasuis serovar 5 (strain SH0165) (Haemophilus parasuis).